A 345-amino-acid polypeptide reads, in one-letter code: Trace amine-associated receptor 6 (345 aa).

Over 1–32 (MSSNSSLLVAVQLCYPNVNGSCVETLYSPGSR) the chain is Extracellular. Residues asparagine 4 and asparagine 19 are each glycosylated (N-linked (GlcNAc...) asparagine). Intrachain disulfides connect cysteine 22–cysteine 186 and cysteine 105–cysteine 190. Residues 33 to 53 (VILYIVFGFGAVLAVFGNLLV) traverse the membrane as a helical segment. Topologically, residues 54-68 (MISILHFKQLHSPTN) are cytoplasmic. A helical membrane pass occupies residues 69–89 (FLVASLACADFLVGVTVMPFS). The Extracellular portion of the chain corresponds to 90 to 107 (MVRTVESCWYFGRSFCTF). A helical transmembrane segment spans residues 108-128 (HTCCDVAFCYSSLFHLCFISI). Over 129–147 (DRYIAVTDPLVYPTKFTVS) the chain is Cytoplasmic. A helical membrane pass occupies residues 148-168 (VSGICISVSWILPLMYSGAVF). At 169 to 202 (YTGVYDDGLEELSDALNCIGGCQTVVNQNWVLID) the chain is on the extracellular side. The helical transmembrane segment at 203–223 (CLSFFIPTFIMIILYGNIFLV) threads the bilayer. Topologically, residues 224 to 259 (ARRQAKKIENTGSKTESSSESYKARVARRERKAAKT) are cytoplasmic. Residues 260–276 (LGVTVVAFMISWLPYSI) form a helical membrane-spanning segment. Residues 277–282 (DSLIDA) lie on the Extracellular side of the membrane. The chain crosses the membrane as a helical span at residues 283–302 (FMGFITPAYIYEICCWCAYY). Over 303 to 345 (NSAMNPLIYALFYPWFRKAIKVIVTGQVLKNSSATMNLFSEHI) the chain is Cytoplasmic.

Belongs to the G-protein coupled receptor 1 family.

The protein localises to the cell membrane. Functionally, olfactory receptor specific for trace amines, such as beta-phenylethylamine (beta-PEA). Trace amine compounds are enriched in animal body fluids and act on trace amine-associated receptors (TAARs) to elicit both intraspecific and interspecific innate behaviors. Beta-PEA-binding causes a conformation change that triggers signaling via G(s)-class of G alpha proteins (GNAL or GNAS). This is Trace amine-associated receptor 6 (TAAR6) from Pan troglodytes (Chimpanzee).